The primary structure comprises 190 residues: Homeobox protein SEBOX (190 aa).

The segment covering 1–11 (MPSPVDASSAD) has biased composition (low complexity). Disordered regions lie at residues 1 to 24 (MPSP…RKRT) and 82 to 161 (ILSP…VHPS). A DNA-binding region (homeobox) is located at residues 19-78 (HRRKRTTFSKGQLLELERAFAAWPYPNISTHEHLAWVTCLPEAKVQVWFQKRWAKIIKNR). The span at 89 to 100 (CPQSSCSLPDTL) shows a compositional bias: polar residues.

It belongs to the paired homeobox family.

The protein localises to the nucleus. Functionally, probable transcription factor involved in the control of specification of mesoderm and endoderm. This chain is Homeobox protein SEBOX (SEBOX), found in Homo sapiens (Human).